A 168-amino-acid chain; its full sequence is N-alpha-acetyltransferase 50 (168 aa).

The 150-residue stretch at 5–154 folds into the N-acetyltransferase domain; it reads IELGDVTPHN…DAHVLQKSLR (150 aa). Tyr-30 contacts substrate. Tyr-72 is an active-site residue. Met-74 provides a ligand contact to substrate. 76–89 contacts acetyl-CoA; sequence LGCLAPYRRLGIGT. His-111 is an active-site residue. Residue 116–125 coordinates CoA; sequence NESAIDFYQK. Residues 137–140 form a substrate region; it reads YYKR.

This sequence belongs to the acetyltransferase family. GNAT subfamily. As to quaternary structure, interacts with naa35.

The protein resides in the cytoplasm. It is found in the nucleus. It catalyses the reaction N-terminal L-methionyl-L-alanyl-[protein] + acetyl-CoA = N-terminal N(alpha)-acetyl-L-methionyl-L-alanyl-[protein] + CoA + H(+). The enzyme catalyses N-terminal L-methionyl-L-seryl-[protein] + acetyl-CoA = N-terminal N(alpha)-acetyl-L-methionyl-L-seryl-[protein] + CoA + H(+). The catalysed reaction is N-terminal L-methionyl-L-valyl-[protein] + acetyl-CoA = N-terminal N(alpha)-acetyl-L-methionyl-L-valyl-[protein] + CoA + H(+). It carries out the reaction N-terminal L-methionyl-L-threonyl-[protein] + acetyl-CoA = N-terminal N(alpha)-acetyl-L-methionyl-L-threonyl-[protein] + CoA + H(+). It catalyses the reaction N-terminal L-methionyl-L-lysyl-[protein] + acetyl-CoA = N-terminal N(alpha)-acetyl-L-methionyl-L-lysyl-[protein] + CoA + H(+). The enzyme catalyses N-terminal L-methionyl-L-leucyl-[protein] + acetyl-CoA = N-terminal N(alpha)-acetyl-L-methionyl-L-leucyl-[protein] + CoA + H(+). The catalysed reaction is N-terminal L-methionyl-L-phenylalanyl-[protein] + acetyl-CoA = N-terminal N(alpha)-acetyl-L-methionyl-L-phenylalanyl-[protein] + CoA + H(+). It carries out the reaction N-terminal L-methionyl-L-tyrosyl-[protein] + acetyl-CoA = N-terminal N(alpha)-acetyl-L-methionyl-L-tyrosyl-[protein] + CoA + H(+). Functionally, N-alpha-acetyltransferase that acetylates the N-terminus of proteins that retain their initiating methionine. Has a broad substrate specificity: able to acetylate the initiator methionine of most peptides, except for those with a proline in second position. Also displays N-epsilon-acetyltransferase activity by mediating acetylation of the side chain of specific lysines on proteins. The relevance of N-epsilon-acetyltransferase activity is however unclear. Required for sister chromatid cohesion during mitosis by promoting binding of CDCA5/sororin to cohesin. Essential in embryonic cell proliferation and survival. The protein is N-alpha-acetyltransferase 50 (naa50) of Danio rerio (Zebrafish).